The following is an 82-amino-acid chain: Large ribosomal subunit protein bL31B-2 (82 aa).

Belongs to the bacterial ribosomal protein bL31 family. Type B subfamily. As to quaternary structure, part of the 50S ribosomal subunit.

The chain is Large ribosomal subunit protein bL31B-2 from Streptomyces avermitilis (strain ATCC 31267 / DSM 46492 / JCM 5070 / NBRC 14893 / NCIMB 12804 / NRRL 8165 / MA-4680).